We begin with the raw amino-acid sequence, 122 residues long: UPF0102 protein RL0336 (122 aa).

It belongs to the UPF0102 family.

The polypeptide is UPF0102 protein RL0336 (Rhizobium johnstonii (strain DSM 114642 / LMG 32736 / 3841) (Rhizobium leguminosarum bv. viciae)).